Here is a 201-residue protein sequence, read N- to C-terminus: Small ribosomal subunit protein uS4c (201 aa).

Positions 89–149 constitute an S4 RNA-binding domain; the sequence is MRLDNILFRL…DKPKSGALIK (61 aa).

Belongs to the universal ribosomal protein uS4 family. Part of the 30S ribosomal subunit. Contacts protein S5. The interaction surface between S4 and S5 is involved in control of translational fidelity.

The protein resides in the plastid. Functionally, one of the primary rRNA binding proteins, it binds directly to 16S rRNA where it nucleates assembly of the body of the 30S subunit. With S5 and S12 plays an important role in translational accuracy. The sequence is that of Small ribosomal subunit protein uS4c (rps4) from Cuscuta exaltata (Tall dodder).